A 230-amino-acid polypeptide reads, in one-letter code: 7-cyano-7-deazaguanine synthase (230 aa).

ATP is bound at residue 14–24 (LSGGLDSTTTL). Zn(2+) is bound by residues Cys-194, Cys-204, Cys-207, and Cys-210.

This sequence belongs to the QueC family. Zn(2+) serves as cofactor.

It catalyses the reaction 7-carboxy-7-deazaguanine + NH4(+) + ATP = 7-cyano-7-deazaguanine + ADP + phosphate + H2O + H(+). Its pathway is purine metabolism; 7-cyano-7-deazaguanine biosynthesis. Catalyzes the ATP-dependent conversion of 7-carboxy-7-deazaguanine (CDG) to 7-cyano-7-deazaguanine (preQ(0)). The sequence is that of 7-cyano-7-deazaguanine synthase from Ruthia magnifica subsp. Calyptogena magnifica.